The following is a 288-amino-acid chain: Transposase InsF for insertion sequence IS3fB (288 aa).

Residues 124–287 (YASGPNQKWA…SPEQFENQNL (164 aa)) form the Integrase catalytic domain.

This sequence belongs to the transposase IS3/IS150/IS904 family.

Functionally, involved in the transposition of the insertion sequence IS3. The sequence is that of Transposase InsF for insertion sequence IS3fB (insF7) from Escherichia coli (strain K12).